Reading from the N-terminus, the 344-residue chain is Phosphoribosylformylglycinamidine cyclo-ligase (344 aa).

The protein belongs to the AIR synthase family.

The protein localises to the cytoplasm. The enzyme catalyses 2-formamido-N(1)-(5-O-phospho-beta-D-ribosyl)acetamidine + ATP = 5-amino-1-(5-phospho-beta-D-ribosyl)imidazole + ADP + phosphate + H(+). It functions in the pathway purine metabolism; IMP biosynthesis via de novo pathway; 5-amino-1-(5-phospho-D-ribosyl)imidazole from N(2)-formyl-N(1)-(5-phospho-D-ribosyl)glycinamide: step 2/2. The chain is Phosphoribosylformylglycinamidine cyclo-ligase from Haemophilus influenzae (strain 86-028NP).